Consider the following 100-residue polypeptide: Aspartyl/glutamyl-tRNA(Asn/Gln) amidotransferase subunit C (100 aa).

It belongs to the GatC family. Heterotrimer of A, B and C subunits.

The catalysed reaction is L-glutamyl-tRNA(Gln) + L-glutamine + ATP + H2O = L-glutaminyl-tRNA(Gln) + L-glutamate + ADP + phosphate + H(+). It carries out the reaction L-aspartyl-tRNA(Asn) + L-glutamine + ATP + H2O = L-asparaginyl-tRNA(Asn) + L-glutamate + ADP + phosphate + 2 H(+). In terms of biological role, allows the formation of correctly charged Asn-tRNA(Asn) or Gln-tRNA(Gln) through the transamidation of misacylated Asp-tRNA(Asn) or Glu-tRNA(Gln) in organisms which lack either or both of asparaginyl-tRNA or glutaminyl-tRNA synthetases. The reaction takes place in the presence of glutamine and ATP through an activated phospho-Asp-tRNA(Asn) or phospho-Glu-tRNA(Gln). This chain is Aspartyl/glutamyl-tRNA(Asn/Gln) amidotransferase subunit C, found in Rickettsia felis (strain ATCC VR-1525 / URRWXCal2) (Rickettsia azadi).